Here is a 296-residue protein sequence, read N- to C-terminus: Sulfotransferase 1C2 (296 aa).

49–54 lines the 3'-phosphoadenylyl sulfate pocket; it reads KSGTTW. 107 to 109 provides a ligand contact to substrate; that stretch reads RTH. Histidine 109 (proton acceptor) is an active-site residue. Residues arginine 131, serine 139, tyrosine 194, and 228–233 contribute to the 3'-phosphoadenylyl sulfate site; that span reads TSFEKM. At serine 139 the chain carries Phosphoserine. Serine 254 carries the post-translational modification Phosphoserine. 256–260 contacts 3'-phosphoadenylyl sulfate; it reads FMRKG.

It belongs to the sulfotransferase 1 family. In terms of tissue distribution, found in gastrointestinal tract tissues, liver and kidney.

The protein resides in the cytoplasm. It is found in the lysosome. Its subcellular location is the mitochondrion. It carries out the reaction a phenol + 3'-phosphoadenylyl sulfate = an aryl sulfate + adenosine 3',5'-bisphosphate + H(+). It catalyses the reaction cholesterol + 3'-phosphoadenylyl sulfate = cholesterol sulfate + adenosine 3',5'-bisphosphate + H(+). Functionally, sulfotransferase that utilizes 3'-phospho-5'-adenylyl sulfate (PAPS) to catalyze the sulfate conjugation of phenolic compounds. Does not transfer sulfate to steroids, dopamine, acetaminophen, or alpha-naphthol. Except in mitochondria, where it can add sulfate to cholesterol producing cholesterol sulfate, which alters mitochondrial membrane organization, and impacts protein complex mobility increasing state-III respiration, thereby modulating mitochondrial respiration. Catalyzes the sulfation of the carcinogenic N-hydroxy-2-acetylaminofluorene leading to highly reactive intermediates capable of forming DNA adducts, potentially resulting in mutagenesis. The sequence is that of Sulfotransferase 1C2 (SULT1C2) from Oryctolagus cuniculus (Rabbit).